The following is a 56-amino-acid chain: uncharacterized protein (56 aa).

A helical membrane pass occupies residues 6-26 (MLLIMLYMVLVVNDLILYNIL).

The protein resides in the membrane. This is an uncharacterized protein from Dictyostelium discoideum (Social amoeba).